We begin with the raw amino-acid sequence, 244 residues long: tRNA pseudouridine synthase A (244 aa).

Aspartate 53 serves as the catalytic Nucleophile. Residue tyrosine 111 coordinates substrate.

This sequence belongs to the tRNA pseudouridine synthase TruA family. As to quaternary structure, homodimer.

It carries out the reaction uridine(38/39/40) in tRNA = pseudouridine(38/39/40) in tRNA. Functionally, formation of pseudouridine at positions 38, 39 and 40 in the anticodon stem and loop of transfer RNAs. This chain is tRNA pseudouridine synthase A, found in Bacillus sp. (strain KSM-64).